The primary structure comprises 564 residues: Dihydroxy-acid dehydratase (564 aa).

Cys-55 is a [2Fe-2S] cluster binding site. A Mg(2+)-binding site is contributed by Asp-87. Residue Cys-128 participates in [2Fe-2S] cluster binding. Positions 129 and 130 each coordinate Mg(2+). Position 130 is an N6-carboxylysine (Lys-130). Cys-200 lines the [2Fe-2S] cluster pocket. Glu-452 is a binding site for Mg(2+). Ser-478 acts as the Proton acceptor in catalysis.

This sequence belongs to the IlvD/Edd family. Homodimer. Requires [2Fe-2S] cluster as cofactor. It depends on Mg(2+) as a cofactor.

The catalysed reaction is (2R)-2,3-dihydroxy-3-methylbutanoate = 3-methyl-2-oxobutanoate + H2O. It catalyses the reaction (2R,3R)-2,3-dihydroxy-3-methylpentanoate = (S)-3-methyl-2-oxopentanoate + H2O. It functions in the pathway amino-acid biosynthesis; L-isoleucine biosynthesis; L-isoleucine from 2-oxobutanoate: step 3/4. The protein operates within amino-acid biosynthesis; L-valine biosynthesis; L-valine from pyruvate: step 3/4. Functions in the biosynthesis of branched-chain amino acids. Catalyzes the dehydration of (2R,3R)-2,3-dihydroxy-3-methylpentanoate (2,3-dihydroxy-3-methylvalerate) into 2-oxo-3-methylpentanoate (2-oxo-3-methylvalerate) and of (2R)-2,3-dihydroxy-3-methylbutanoate (2,3-dihydroxyisovalerate) into 2-oxo-3-methylbutanoate (2-oxoisovalerate), the penultimate precursor to L-isoleucine and L-valine, respectively. The sequence is that of Dihydroxy-acid dehydratase from Polaromonas sp. (strain JS666 / ATCC BAA-500).